A 193-amino-acid polypeptide reads, in one-letter code: Pyridoxal 5'-phosphate synthase subunit PdxT (193 aa).

48–50 (GES) contributes to the L-glutamine binding site. Residue Cys-80 is the Nucleophile of the active site. Residues Arg-107 and 136–137 (IR) contribute to the L-glutamine site. Active-site charge relay system residues include His-172 and Glu-174.

It belongs to the glutaminase PdxT/SNO family. In terms of assembly, in the presence of PdxS, forms a dodecamer of heterodimers. Only shows activity in the heterodimer.

The catalysed reaction is aldehydo-D-ribose 5-phosphate + D-glyceraldehyde 3-phosphate + L-glutamine = pyridoxal 5'-phosphate + L-glutamate + phosphate + 3 H2O + H(+). The enzyme catalyses L-glutamine + H2O = L-glutamate + NH4(+). The protein operates within cofactor biosynthesis; pyridoxal 5'-phosphate biosynthesis. Its function is as follows. Catalyzes the hydrolysis of glutamine to glutamate and ammonia as part of the biosynthesis of pyridoxal 5'-phosphate. The resulting ammonia molecule is channeled to the active site of PdxS. The sequence is that of Pyridoxal 5'-phosphate synthase subunit PdxT from Clostridium botulinum (strain Loch Maree / Type A3).